An 88-amino-acid polypeptide reads, in one-letter code: Small ribosomal subunit protein uS17 (88 aa).

Belongs to the universal ribosomal protein uS17 family. As to quaternary structure, part of the 30S ribosomal subunit.

One of the primary rRNA binding proteins, it binds specifically to the 5'-end of 16S ribosomal RNA. This is Small ribosomal subunit protein uS17 from Leuconostoc mesenteroides subsp. mesenteroides (strain ATCC 8293 / DSM 20343 / BCRC 11652 / CCM 1803 / JCM 6124 / NCDO 523 / NBRC 100496 / NCIMB 8023 / NCTC 12954 / NRRL B-1118 / 37Y).